The chain runs to 428 residues: Serine--tRNA ligase (428 aa).

235 to 237 lines the L-serine pocket; it reads TAE. Residue 266 to 268 coordinates ATP; sequence RSE. Residue E289 coordinates L-serine. 353-356 is an ATP binding site; sequence EISS. L-serine is bound at residue S389.

It belongs to the class-II aminoacyl-tRNA synthetase family. Type-1 seryl-tRNA synthetase subfamily. Homodimer. The tRNA molecule binds across the dimer.

It localises to the cytoplasm. It carries out the reaction tRNA(Ser) + L-serine + ATP = L-seryl-tRNA(Ser) + AMP + diphosphate + H(+). It catalyses the reaction tRNA(Sec) + L-serine + ATP = L-seryl-tRNA(Sec) + AMP + diphosphate + H(+). The protein operates within aminoacyl-tRNA biosynthesis; selenocysteinyl-tRNA(Sec) biosynthesis; L-seryl-tRNA(Sec) from L-serine and tRNA(Sec): step 1/1. Its function is as follows. Catalyzes the attachment of serine to tRNA(Ser). Is also able to aminoacylate tRNA(Sec) with serine, to form the misacylated tRNA L-seryl-tRNA(Sec), which will be further converted into selenocysteinyl-tRNA(Sec). This is Serine--tRNA ligase from Shewanella baltica (strain OS223).